The following is a 2758-amino-acid chain: Highly reducing polyketide synthase NEC1 (2758 aa).

The Ketosynthase family 3 (KS3) domain maps to 153 to 492 (EASSPIIGLD…GSNAHVVMDD (340 aa)). The tract at residues 512-576 (PRLPGSSSSR…NTDTLQTTDT (65 aa)) is disordered. The segment covering 566–576 (TNTDTLQTTDT) has biased composition (low complexity). Positions 700–1044 (VFTGQGAQWP…GYATVLKRGD (345 aa)) are malonyl-CoA:ACP transacylase (MAT) domain. Ser-790 (for malonyltransferase activity) is an active-site residue. Residues 1124–1255 (HELLGAPVPD…GFVRTEYSQT (132 aa)) form an N-terminal hotdog fold region. The interval 1124-1442 (HELLGAPVPD…VFKTIPNTAS (319 aa)) is dehydratase (DH) domain. Residues 1124-1443 (HELLGAPVPD…FKTIPNTASS (320 aa)) enclose the PKS/mFAS DH domain. The active-site Proton acceptor; for dehydratase activity is His-1156. The C-terminal hotdog fold stretch occupies residues 1283–1443 (TSMVHADKVY…FKTIPNTASS (161 aa)). The active-site Proton donor; for dehydratase activity is the Asp-1351. The segment at 1622–1727 (LEVGGGTGGA…RKLLKPGGKL (106 aa)) is methyltransferase (CMet) domain. An enoyl reductase (ER) domain region spans residues 2031-2344 (GTADVCFSED…LGKGEDAVVL (314 aa)). The interval 2372–2553 (ASYMVVGGLG…PVAVSLDLPV (182 aa)) is ketoreductase (KR) domain. The 78-residue stretch at 2673-2750 (EAQAVVLDAL…ALAAAVAGRS (78 aa)) folds into the Carrier domain. Ser-2710 carries the O-(pantetheine 4'-phosphoryl)serine modification.

In terms of biological role, highly reducing polyketide synthase; part of the gene cluster that mediates the biosynthesis of nectriapyrone and its analogs phomopyrone A, acropyrone and zaepyrone. The nectriapyrone biosynthetic gene cluster consists of two genes, the highly reducing polyketide synthase NEC1 that produces a demethylated analog of nectriapyrone from one unit of acetyl-CoA and one unit of malonyl-CoA; and the O-methyltransferase NEC2 that further methylates the NEC1 product to yield nectriapyrone. Nectriapyrone is further hydrolyzed to nectriapyrone D, also known as gulypyrone B, by an unidentified hydrolase localized outside the nectriapyrone cluster. This is Highly reducing polyketide synthase NEC1 from Pyricularia oryzae (strain 70-15 / ATCC MYA-4617 / FGSC 8958) (Rice blast fungus).